The chain runs to 133 residues: Histone H2A.1 (133 aa).

The interval 1–23 (MSTTGKGGKAKGKTASSKQVSRS) is disordered. At Ser-2 the chain carries N-acetylserine. N6-acetyllysine occurs at positions 6, 9, 11, 13, and 18. Ser-123 bears the Phosphoserine mark. Residue Lys-124 forms a Glycyl lysine isopeptide (Lys-Gly) (interchain with G-Cter in ubiquitin) linkage. Position 129 is a phosphoserine (Ser-129).

Belongs to the histone H2A family. As to quaternary structure, the nucleosome is a histone octamer containing two molecules each of H2A, H2B, H3 and H4 assembled in one H3-H4 heterotetramer and two H2A-H2B heterodimers. The octamer wraps approximately 147 bp of DNA. Post-translationally, monoubiquitination of Lys-124 gives a specific tag for epigenetic transcriptional repression. In terms of processing, acetylation occurs almost exclusively in the MAC.

The protein localises to the nucleus. Its subcellular location is the chromosome. In terms of biological role, core component of nucleosome. Nucleosomes wrap and compact DNA into chromatin, limiting DNA accessibility to the cellular machineries which require DNA as a template. Histones thereby play a central role in transcription regulation, DNA repair, DNA replication and chromosomal stability. DNA accessibility is regulated via a complex set of post-translational modifications of histones, also called histone code, and nucleosome remodeling. The sequence is that of Histone H2A.1 (HTA2) from Tetrahymena pyriformis.